The sequence spans 162 residues: Interleukin-2 (162 aa).

A signal peptide spans 1–20 (MYKIQLLSCIALTLALVANG). O-linked (GalNAc...) threonine glycosylation is present at T23. N70 carries N-linked (GlcNAc...) asparagine glycosylation. An intrachain disulfide couples C79 to C134.

This sequence belongs to the IL-2 family.

It is found in the secreted. Functionally, cytokine produced by activated CD4-positive helper T-cells and to a lesser extend activated CD8-positive T-cells and natural killer (NK) cells that plays pivotal roles in the immune response and tolerance. Binds to a receptor complex composed of either the high-affinity trimeric IL-2R (IL2RA/CD25, IL2RB/CD122 and IL2RG/CD132) or the low-affinity dimeric IL-2R (IL2RB and IL2RG). Interaction with the receptor leads to oligomerization and conformation changes in the IL-2R subunits resulting in downstream signaling starting with phosphorylation of JAK1 and JAK3. In turn, JAK1 and JAK3 phosphorylate the receptor to form a docking site leading to the phosphorylation of several substrates including STAT5. This process leads to activation of several pathways including STAT, phosphoinositide-3-kinase/PI3K and mitogen-activated protein kinase/MAPK pathways. Functions as a T-cell growth factor and can increase NK-cell cytolytic activity as well. Promotes strong proliferation of activated B-cells and subsequently immunoglobulin production. Plays a pivotal role in regulating the adaptive immune system by controlling the survival and proliferation of regulatory T-cells, which are required for the maintenance of immune tolerance. Moreover, participates in the differentiation and homeostasis of effector T-cell subsets, including Th1, Th2, Th17 as well as memory CD8-positive T-cells. In Cervus elaphus (Red deer), this protein is Interleukin-2 (IL2).